The sequence spans 86 residues: Cell division topological specificity factor (86 aa).

The protein belongs to the MinE family.

Its function is as follows. Prevents the cell division inhibition by proteins MinC and MinD at internal division sites while permitting inhibition at polar sites. This ensures cell division at the proper site by restricting the formation of a division septum at the midpoint of the long axis of the cell. The protein is Cell division topological specificity factor of Rhizobium johnstonii (strain DSM 114642 / LMG 32736 / 3841) (Rhizobium leguminosarum bv. viciae).